Consider the following 365-residue polypeptide: Histidinol-phosphate aminotransferase (365 aa).

An N6-(pyridoxal phosphate)lysine modification is found at lysine 223.

Belongs to the class-II pyridoxal-phosphate-dependent aminotransferase family. Histidinol-phosphate aminotransferase subfamily. Homodimer. Pyridoxal 5'-phosphate is required as a cofactor.

It catalyses the reaction L-histidinol phosphate + 2-oxoglutarate = 3-(imidazol-4-yl)-2-oxopropyl phosphate + L-glutamate. The protein operates within amino-acid biosynthesis; L-histidine biosynthesis; L-histidine from 5-phospho-alpha-D-ribose 1-diphosphate: step 7/9. In Bacillus pumilus (strain SAFR-032), this protein is Histidinol-phosphate aminotransferase.